The following is a 435-amino-acid chain: Probable histidine--tRNA ligase, cytoplasmic (435 aa).

Belongs to the class-II aminoacyl-tRNA synthetase family.

The protein resides in the cytoplasm. It carries out the reaction tRNA(His) + L-histidine + ATP = L-histidyl-tRNA(His) + AMP + diphosphate + H(+). In Encephalitozoon cuniculi (strain GB-M1) (Microsporidian parasite), this protein is Probable histidine--tRNA ligase, cytoplasmic.